The sequence spans 325 residues: Acetyl-coenzyme A carboxylase carboxyl transferase subunit alpha (325 aa).

The region spanning 35 to 292 is the CoA carboxyltransferase C-terminal domain; sequence EINKLEARLE…DDVLKRSLRE (258 aa).

Belongs to the AccA family. Acetyl-CoA carboxylase is a heterohexamer composed of biotin carboxyl carrier protein (AccB), biotin carboxylase (AccC) and two subunits each of ACCase subunit alpha (AccA) and ACCase subunit beta (AccD).

Its subcellular location is the cytoplasm. It catalyses the reaction N(6)-carboxybiotinyl-L-lysyl-[protein] + acetyl-CoA = N(6)-biotinyl-L-lysyl-[protein] + malonyl-CoA. It functions in the pathway lipid metabolism; malonyl-CoA biosynthesis; malonyl-CoA from acetyl-CoA: step 1/1. Component of the acetyl coenzyme A carboxylase (ACC) complex. First, biotin carboxylase catalyzes the carboxylation of biotin on its carrier protein (BCCP) and then the CO(2) group is transferred by the carboxyltransferase to acetyl-CoA to form malonyl-CoA. The chain is Acetyl-coenzyme A carboxylase carboxyl transferase subunit alpha from Anoxybacillus flavithermus (strain DSM 21510 / WK1).